We begin with the raw amino-acid sequence, 216 residues long: Adenylate kinase (216 aa).

10-15 (GAGKGT) is an ATP binding site. The tract at residues 30–59 (STGDILRENVKKGTALGLKAKSYMDKGELV) is NMP. AMP is bound by residues threonine 31, arginine 36, 57–59 (ELV), 85–88 (GFPR), and glutamine 92. The tract at residues 126-163 (GRRICRSCGASYHLVFNPPKAKDLCDSCGGELYQRDDD) is LID. Arginine 127 lines the ATP pocket. Residues cysteine 130 and cysteine 133 each coordinate Zn(2+). 136-137 (SY) is an ATP binding site. Cysteine 150 and cysteine 153 together coordinate Zn(2+). AMP-binding residues include arginine 160 and arginine 171. Lysine 199 lines the ATP pocket.

The protein belongs to the adenylate kinase family. In terms of assembly, monomer.

Its subcellular location is the cytoplasm. The enzyme catalyses AMP + ATP = 2 ADP. The protein operates within purine metabolism; AMP biosynthesis via salvage pathway; AMP from ADP: step 1/1. In terms of biological role, catalyzes the reversible transfer of the terminal phosphate group between ATP and AMP. Plays an important role in cellular energy homeostasis and in adenine nucleotide metabolism. The chain is Adenylate kinase from Methanocella arvoryzae (strain DSM 22066 / NBRC 105507 / MRE50).